Here is a 297-residue protein sequence, read N- to C-terminus: UDP-N-acetylglucosamine transporter TMEM241 (297 aa).

The next 10 membrane-spanning stretches (helical) occupy residues 7 to 29 (LLGL…VLSV), 32 to 52 (FTYP…LLHM), 69 to 89 (VLIW…GSKA), 93 to 113 (LAVP…CGYQ), 121 to 141 (TSLS…CLPF), 146 to 166 (FDPD…SYKI), 187 to 207 (IFSM…FGAL), 211 to 231 (FLYF…GFFL), 250 to 270 (WILC…DMAL), and 271 to 291 (TKAT…LVFS).

It belongs to the nucleotide-sugar transporter family. SLC35A subfamily. In terms of tissue distribution, widely expressed with high expression in lung.

Its subcellular location is the golgi apparatus. It is found in the cis-Golgi network membrane. In terms of biological role, golgi-localized UDP-N-acetylglucosamine (UDP-GlcNAc) transporter that transports UDP-N-acetylglucosamine into Golgi lumen. Contributes to lysosomal targeting of NPC2, a key protein required for lysosomal cholesterol exiting, and that utilizes the mannose-6-phosphate (M6P) modification pathway for its lysosomal targeting. This is UDP-N-acetylglucosamine transporter TMEM241 (Tmem241) from Mus musculus (Mouse).